Consider the following 297-residue polypeptide: Acetyl-coenzyme A carboxylase carboxyl transferase subunit beta (297 aa).

One can recognise a CoA carboxyltransferase N-terminal domain in the interval 25–294 (LWVKCPETGQ…VPPKGRLPAP (270 aa)).

This sequence belongs to the AccD/PCCB family. In terms of assembly, acetyl-CoA carboxylase is a heterohexamer composed of biotin carboxyl carrier protein (AccB), biotin carboxylase (AccC) and two subunits each of ACCase subunit alpha (AccA) and ACCase subunit beta (AccD).

The protein resides in the cytoplasm. The catalysed reaction is N(6)-carboxybiotinyl-L-lysyl-[protein] + acetyl-CoA = N(6)-biotinyl-L-lysyl-[protein] + malonyl-CoA. It functions in the pathway lipid metabolism; malonyl-CoA biosynthesis; malonyl-CoA from acetyl-CoA: step 1/1. Component of the acetyl coenzyme A carboxylase (ACC) complex. Biotin carboxylase (BC) catalyzes the carboxylation of biotin on its carrier protein (BCCP) and then the CO(2) group is transferred by the transcarboxylase to acetyl-CoA to form malonyl-CoA. The chain is Acetyl-coenzyme A carboxylase carboxyl transferase subunit beta from Azorhizobium caulinodans (strain ATCC 43989 / DSM 5975 / JCM 20966 / LMG 6465 / NBRC 14845 / NCIMB 13405 / ORS 571).